Here is a 622-residue protein sequence, read N- to C-terminus: Cytochrome c oxidase subunit 1 (622 aa).

Topologically, residues 1-27 (MLNALTEKRTRGSMLWDYLTTVDHKKI) are extracellular. A helical membrane pass occupies residues 28–46 (AILYLVAGGFFFLVGGIEA). At 47 to 68 (MFIRIQLAKPENAFLSAQAYNE) the chain is on the cytoplasmic side. Residues 69-88 (VMTMHGTTMIFLAAMPLLFA) form a helical membrane-spanning segment. Fe(II)-heme a is bound at residue His73. At 89 to 110 (LMNAVVPLQIGARDVSFPFLNA) the chain is on the extracellular side. A helical transmembrane segment spans residues 111-128 (LGFWLFFFGGIFLNLSWF). The Cytoplasmic portion of the chain corresponds to 129 to 159 (LGGAPDAGWTSYASLSLHSKGHGIDFFVLGL). The chain crosses the membrane as a helical span at residues 160-178 (QISGLGTLIAGINFLATII). The Extracellular segment spans residues 179–196 (NMRAPGMTYMRLPLFTWT). The chain crosses the membrane as a helical span at residues 197–215 (TFVASALILFAFPPLTVGL). Over 216 to 241 (ALMMLDRLFGTNFFNPELGGNTVIWE) the chain is Cytoplasmic. Residues 242–261 (HLFWIFGHPEVYILILPAFG) form a helical membrane-spanning segment. Cu cation-binding residues include His249 and Tyr253. A cross-link (1'-histidyl-3'-tyrosine (His-Tyr)) is located at residues 249–253 (HPEVY). Topologically, residues 262–284 (IFSEVIPVFARKRLFGYSSMVFA) are extracellular. The chain crosses the membrane as a helical span at residues 285 to 304 (IVLIGFLGFMVWVHHMFTTG). Cu cation is bound by residues His298 and His299. Over 305–312 (LGPIANAI) the chain is Cytoplasmic. Residues 313–331 (FAVATMAIAIPTGIKIFNW) form a helical membrane-spanning segment. Over 332 to 346 (LLTIWGGNVKYTTAM) the chain is Extracellular. The helical transmembrane segment at 347 to 366 (LYAVSFIPSFVLGGVTGVML) threads the bilayer. The Cytoplasmic segment spans residues 367–374 (AAAAADYQ). Residues 375–394 (FHDTYFVVAHFHYVIIGGVV) form a helical membrane-spanning segment. Residue His384 participates in heme a3 binding. Residue His386 coordinates Fe(II)-heme a. The Extracellular segment spans residues 395–421 (FGLLAGVHFWWPKMFGKILHETMGKIS). A helical transmembrane segment spans residues 422 to 441 (FVLFFIGFHLTFFIQHFVGL). The Cytoplasmic segment spans residues 442–459 (MGMPRRVYTFLPGQGLET). The helical transmembrane segment at 460-479 (GNLISTIGAFFMAAAVILLL) threads the bilayer. Residues 480–552 (VNVIWTSVKG…EPVDDIHMPN (73 aa)) are Extracellular-facing. Residues 553–572 (GSILPLIISFGLFVAAFGLL) traverse the membrane as a helical segment. Over 573-580 (YRSDYAWG) the chain is Cytoplasmic. The chain crosses the membrane as a helical span at residues 581-604 (LPVIFIGLGITFITMLLRSVIDDH). Residues 605–622 (GYHIHKEELPNDDKGVKA) lie on the Cytoplasmic side of the membrane.

The protein belongs to the heme-copper respiratory oxidase family. Cu(2+) is required as a cofactor. It depends on heme as a cofactor.

It localises to the cell membrane. It catalyses the reaction 4 Fe(II)-[cytochrome c] + O2 + 8 H(+)(in) = 4 Fe(III)-[cytochrome c] + 2 H2O + 4 H(+)(out). It functions in the pathway energy metabolism; oxidative phosphorylation. In terms of biological role, cytochrome c oxidase is the component of the respiratory chain that catalyzes the reduction of oxygen to water. Subunits 1-3 form the functional core of the enzyme complex. Co I is the catalytic subunit of the enzyme. Electrons originating in cytochrome c are transferred via the copper A center of subunit 2 and heme a of subunit 1 to the bimetallic center formed by heme a3 and copper B. This cytochrome c oxidase shows proton pump activity across the membrane in addition to the electron transfer. The sequence is that of Cytochrome c oxidase subunit 1 (ctaD) from Bacillus subtilis (strain 168).